The following is a 1150-amino-acid chain: Voltage-dependent calcium channel subunit alpha-2/delta-2 (1150 aa).

An N-terminal signal peptide occupies residues 1–18 (MAVPARTCGASRPGPART). The disordered stretch occupies residues 1–41 (MAVPARTCGASRPGPARTARPWPGCGPHPGPGTRRPTSGPP). The Extracellular portion of the chain corresponds to 19-1113 (ARPWPGCGPH…TEDTSDCGRG (1095 aa)). In terms of domain architecture, VWFA spans 291 to 469 (DMVIIVDVSG…INTQEYLDVL (179 aa)). Residues Asp-297, Ser-299, and Ser-301 each contribute to the a divalent metal cation site. The MIDAS-like motif signature appears at 297–301 (DVSGS). Residues Asn-386, Asn-418, Asn-507, Asn-540, Asn-624, and Asn-861 are each glycosylated (N-linked (GlcNAc...) asparagine). The cysteines at positions 443 and 1098 are disulfide-linked. The region spanning 485-574 (WTNVYEDALG…KPQTTNFREP (90 aa)) is the Cache domain. Residues 1114–1134 (ASFPPSLGVLVSLQLLLLLGL) traverse the membrane as a helical segment. At 1135 to 1150 (PPRPQPQVLVHASRRL) the chain is on the cytoplasmic side.

It belongs to the calcium channel subunit alpha-2/delta family. In terms of assembly, dimer formed of alpha-2-2 and delta-2 chains; disulfide-linked. Voltage-dependent calcium channels are multisubunit complexes, consisting of alpha-1 (CACNA1), alpha-2 (CACNA2D), beta (CACNB) and delta (CACNA2D) subunits in a 1:1:1:1 ratio. May be proteolytically processed into subunits alpha-2-2 and delta-2 that are disulfide-linked. It is however unclear whether such cleavage really takes place in vivo and has a functional role. Predominantly present in cerebellar cortex. Present in various lung tumor cell lines, while it is absent in normal lung (at protein level). Highly expressed in heart, lung, testis, pancreas and skeletal muscle. Also expressed in kidney, liver, placenta and brain.

The protein resides in the membrane. In terms of biological role, the alpha-2/delta subunit of voltage-dependent calcium channels regulates calcium current density and activation/inactivation kinetics of the calcium channel. Acts as a regulatory subunit for P/Q-type calcium channel (CACNA1A), N-type (CACNA1B), L-type (CACNA1C OR CACNA1D) and possibly T-type (CACNA1G). Overexpression induces apoptosis. The polypeptide is Voltage-dependent calcium channel subunit alpha-2/delta-2 (CACNA2D2) (Homo sapiens (Human)).